Here is a 100-residue protein sequence, read N- to C-terminus: Integration host factor subunit alpha (100 aa).

It belongs to the bacterial histone-like protein family. In terms of assembly, heterodimer of an alpha and a beta chain.

This protein is one of the two subunits of integration host factor, a specific DNA-binding protein that functions in genetic recombination as well as in transcriptional and translational control. The sequence is that of Integration host factor subunit alpha from Cereibacter sphaeroides (strain ATCC 17023 / DSM 158 / JCM 6121 / CCUG 31486 / LMG 2827 / NBRC 12203 / NCIMB 8253 / ATH 2.4.1.) (Rhodobacter sphaeroides).